The chain runs to 194 residues: ATP-dependent Clp protease proteolytic subunit (194 aa).

S98 (nucleophile) is an active-site residue. H123 is an active-site residue.

This sequence belongs to the peptidase S14 family. As to quaternary structure, fourteen ClpP subunits assemble into 2 heptameric rings which stack back to back to give a disk-like structure with a central cavity, resembling the structure of eukaryotic proteasomes.

Its subcellular location is the cytoplasm. The enzyme catalyses Hydrolysis of proteins to small peptides in the presence of ATP and magnesium. alpha-casein is the usual test substrate. In the absence of ATP, only oligopeptides shorter than five residues are hydrolyzed (such as succinyl-Leu-Tyr-|-NHMec, and Leu-Tyr-Leu-|-Tyr-Trp, in which cleavage of the -Tyr-|-Leu- and -Tyr-|-Trp bonds also occurs).. Cleaves peptides in various proteins in a process that requires ATP hydrolysis. Has a chymotrypsin-like activity. Plays a major role in the degradation of misfolded proteins. The chain is ATP-dependent Clp protease proteolytic subunit from Staphylococcus saprophyticus subsp. saprophyticus (strain ATCC 15305 / DSM 20229 / NCIMB 8711 / NCTC 7292 / S-41).